Reading from the N-terminus, the 213-residue chain is Large ribosomal subunit protein mL67 (213 aa).

This sequence belongs to the mitochondrion-specific ribosomal protein mL67 family.

The protein resides in the nucleus. It is found in the mitochondrion. Transcription factor involved in regulation of RNA polymerase II-dependent transcription. Also involved in regulation of mitochondrial DNA recombination, maintenance and repair, and generation of homoplasmic cells. This chain is Large ribosomal subunit protein mL67 (MHR1), found in Eremothecium gossypii (strain ATCC 10895 / CBS 109.51 / FGSC 9923 / NRRL Y-1056) (Yeast).